The following is a 119-amino-acid chain: Acidic phospholipase A2 2 (119 aa).

7 disulfides stabilise this stretch: cysteine 11-cysteine 71, cysteine 26-cysteine 118, cysteine 28-cysteine 44, cysteine 43-cysteine 99, cysteine 50-cysteine 92, cysteine 60-cysteine 85, and cysteine 78-cysteine 90. 3 residues coordinate Ca(2+): tyrosine 27, glycine 29, and glycine 31. Residue histidine 47 is part of the active site. Residue aspartate 48 coordinates Ca(2+). The active site involves aspartate 93.

This sequence belongs to the phospholipase A2 family. Group I subfamily. D49 sub-subfamily. As to quaternary structure, homotrimer. Ca(2+) serves as cofactor. As to expression, expressed by the venom gland.

Its subcellular location is the secreted. The enzyme catalyses a 1,2-diacyl-sn-glycero-3-phosphocholine + H2O = a 1-acyl-sn-glycero-3-phosphocholine + a fatty acid + H(+). In terms of biological role, PLA2 catalyzes the calcium-dependent hydrolysis of the 2-acyl groups in 3-sn-phosphoglycerides. This is Acidic phospholipase A2 2 from Naja naja (Indian cobra).